An 866-amino-acid chain; its full sequence is Autophagy-related protein 9 (866 aa).

Over 1 to 94 (MMSSGHKGPN…KGLWCIIVKW (94 aa)) the chain is Cytoplasmic. Residues 95 to 115 (AVELLSLGFIICFSGFFLLYV) form a helical membrane-spanning segment. Over 116–153 (DWNGLQNAKCGMDAVESGTKPCDLVKEAIHPHPLSPFT) the chain is Lumenal. The chain crosses the membrane as a helical span at residues 154–174 (LTTAIIVGYLALFSVYWLFCF). At 175-319 (LRFFAQLKDT…VSNPTTLKKR (145 aa)) the chain is on the cytoplasmic side. Residues 320–340 (LFVVGLAMLLLSPFLVIFMLV) lie within the membrane without spanning it. Residues 341–404 (YLFLRHAEQF…LKQFPSPIIS (64 aa)) are Cytoplasmic-facing. The chain crosses the membrane as a helical span at residues 405 to 425 (IIAKFVSFVSGGFAAVLIIIA). The Lumenal portion of the chain corresponds to 426-433 (FLEESLLE). Residues 434–454 (GHIFGRNLFWYAAVFGTITAI) form a helical membrane-spanning segment. Residues 455–507 (SRAAISDELLVLDPVGTMSLVVQNTHYMPKRWRGKENKDDVRLELETLFQYTG) are Cytoplasmic-facing. An intramembrane segment occupies 508 to 528 (MMLLEEIASIFITPFLLMFVV). At 529 to 866 (PKRVDDILQF…ETSTSSTTLR (338 aa)) the chain is on the cytoplasmic side. The disordered stretch occupies residues 744 to 781 (QPEGEDSYGSQHPLDGRNQWWGRGNHSQISTAHPATTN). Positions 768–781 (NHSQISTAHPATTN) are enriched in polar residues.

The protein belongs to the ATG9 family. In terms of assembly, homotrimer; forms a homotrimer with a central pore that forms a path between the two membrane leaflets. As to expression, expressed in roots, leaves, stems and flowers.

It localises to the preautophagosomal structure membrane. Functionally, phospholipid scramblase involved in autophagy by mediating autophagosomal membrane expansion. Cycles between the preautophagosomal structure/phagophore assembly site (PAS) and the cytoplasmic vesicle pool and supplies membrane for the growing autophagosome. Lipid scramblase activity plays a key role in preautophagosomal structure/phagophore assembly by distributing the phospholipids that arrive through ATG2 from the cytoplasmic to the luminal leaflet of the bilayer, thereby driving autophagosomal membrane expansion. In addition to autophagy, also plays a role in necrotic cell death. Plays an essential role in plant nutrient recycling. In Arabidopsis thaliana (Mouse-ear cress), this protein is Autophagy-related protein 9.